The primary structure comprises 254 residues: AA9 family lytic polysaccharide monooxygenase A (254 aa).

Residues 1-19 (MKYSILGLTALSFVASAAA) form the signal peptide. His20 is a Cu(2+) binding site. A Methylhistidine modification is found at His20. Residue Val28 coordinates (1,4-beta-D-glucosyl)n. Asn52 carries N-linked (GlcNAc...) asparagine glycosylation. Cys60 and Cys186 form a disulfide bridge. Positions 66, 67, 77, and 86 each coordinate (1,4-beta-D-glucosyl)n. Cu(2+) is bound at residue His97. Residue Asn129 is glycosylated (N-linked (GlcNAc...) asparagine). Val148 and Arg159 together coordinate (1,4-beta-D-glucosyl)n. O2 contacts are provided by His166 and Gln181. Residue Tyr183 participates in Cu(2+) binding.

Belongs to the polysaccharide monooxygenase AA9 family. Cu(2+) is required as a cofactor. The catalytically essential N-terminal histidine His-20 is post-translationally modified by methylation to prevent protonation of the histidine side chain, and protect the critical active site of the enzyme from oxidative damage.

The protein localises to the secreted. It catalyses the reaction [(1-&gt;4)-beta-D-glucosyl]n+m + reduced acceptor + O2 = 4-dehydro-beta-D-glucosyl-[(1-&gt;4)-beta-D-glucosyl]n-1 + [(1-&gt;4)-beta-D-glucosyl]m + acceptor + H2O.. The polyphenol cinnamtannin B1 contained in methanolic extract of Cinnamomum cassia (cinnamon) acts as an inhibitor of catalytic activity. Lytic polysaccharide monooxygenase (LPMO) that depolymerizes crystalline and amorphous polysaccharides via the oxidation of scissile alpha- or beta-(1-4)-glycosidic bonds, yielding C1 or C4 oxidation product. Catalysis by LPMOs requires the reduction of the active-site copper from Cu(II) to Cu(I) by a reducing agent and H(2)O(2) or O(2) as a cosubstrate. Is able to cleave phosphoric acid swollen cellulose (PASC) in the presence of a reducing agent, yielding a range of cellooligosaccharides dominated by cellobiose and cellotriose. Activity is less sensitive to the reducing agent potential when cleaving xylan, suggesting that distinct catalytic mechanisms exist for xylan and glucan cleavage. The sequence is that of AA9 family lytic polysaccharide monooxygenase A from Panus similis (Lentinoid fungus).